Reading from the N-terminus, the 312-residue chain is DNA-directed RNA polymerase subunit alpha (312 aa).

The interval 1–229 is alpha N-terminal domain (alpha-NTD); that stretch reads MLQYQIERID…ELFQPLATVT (229 aa). An alpha C-terminal domain (alpha-CTD) region spans residues 240 to 312; that stretch reads PSPEAQIPLE…ISIPQSRTSV (73 aa).

Belongs to the RNA polymerase alpha chain family. As to quaternary structure, in cyanobacteria the RNAP catalytic core is composed of 2 alpha, 1 beta, 1 beta', 1 gamma and 1 omega subunit. When a sigma factor is associated with the core the holoenzyme is formed, which can initiate transcription.

It catalyses the reaction RNA(n) + a ribonucleoside 5'-triphosphate = RNA(n+1) + diphosphate. DNA-dependent RNA polymerase catalyzes the transcription of DNA into RNA using the four ribonucleoside triphosphates as substrates. The chain is DNA-directed RNA polymerase subunit alpha from Prochlorococcus marinus (strain MIT 9301).